Here is a 432-residue protein sequence, read N- to C-terminus: 3-phosphoshikimate 1-carboxyvinyltransferase (432 aa).

Residues Lys-23, Ser-24, and Arg-28 each contribute to the 3-phosphoshikimate site. Lys-23 serves as a coordination point for phosphoenolpyruvate. Phosphoenolpyruvate-binding residues include Gly-95 and Arg-123. 3-phosphoshikimate-binding residues include Ser-167, Gln-169, Asp-317, and Lys-344. Gln-169 is a phosphoenolpyruvate binding site. The active-site Proton acceptor is the Asp-317. Residues Arg-348 and Arg-390 each coordinate phosphoenolpyruvate.

Belongs to the EPSP synthase family. Monomer.

Its subcellular location is the cytoplasm. It carries out the reaction 3-phosphoshikimate + phosphoenolpyruvate = 5-O-(1-carboxyvinyl)-3-phosphoshikimate + phosphate. It participates in metabolic intermediate biosynthesis; chorismate biosynthesis; chorismate from D-erythrose 4-phosphate and phosphoenolpyruvate: step 6/7. In terms of biological role, catalyzes the transfer of the enolpyruvyl moiety of phosphoenolpyruvate (PEP) to the 5-hydroxyl of shikimate-3-phosphate (S3P) to produce enolpyruvyl shikimate-3-phosphate and inorganic phosphate. This is 3-phosphoshikimate 1-carboxyvinyltransferase from Staphylococcus carnosus (strain TM300).